A 1223-amino-acid polypeptide reads, in one-letter code: Rho family-interacting cell polarization regulator 1 (1223 aa).

The residue at position 22 (S22) is a Phosphoserine. A coiled-coil region spans residues 83–112 (RGLTAYLEVHQQEQEKLQRQIKESKRNSRL). A phosphoserine mark is found at S345 and S347. At T351 the chain carries Phosphothreonine. Positions 371–411 (NGTAWSLSSESSDDSSSPQLSGTARHSTPKPLVQQPEPLPV) are disordered. Low complexity-rich tracts occupy residues 376 to 391 (SLSSESSDDSSSPQLS) and 399 to 411 (PKPLVQQPEPLPV). 3 positions are modified to phosphoserine: S451, S454, and S468. Composition is skewed to low complexity over residues 566–586 (TTIGSAHTTTPSPLTSTGSVP) and 595–655 (TPSP…TSPT). Disordered regions lie at residues 566–771 (TTIG…QHSE) and 856–887 (FLNDDEDEDNDGPGDRHTSSPEVVAEDRLDSS). Over residues 656-665 (QEAKMSTHTT) the composition is skewed to polar residues. Low complexity predominate over residues 673 to 688 (TTTSPISTTESPSPST). Polar residues-rich tracts occupy residues 693-703 (ISSSSAESTGP) and 725-741 (ASCTSYQSLASSGSKPL). Phosphoserine is present on S748. Over residues 748–767 (SPEQIPKSPSSSPSSSAPEP) the composition is skewed to low complexity. Residues 858–867 (NDDEDEDNDG) show a composition bias toward acidic residues. A compositionally biased stretch (basic and acidic residues) spans 868–885 (PGDRHTSSPEVVAEDRLD). Residues S874 and S875 each carry the phosphoserine modification.

This sequence belongs to the RIPOR family. Interacts (via N-terminus) with RHOA (GTP-bound form); this interaction links active RHOA to STK24 and STK26 kinases. Interacts with RHOB. Interacts with RHOC. Interacts (via C-terminus) with PDCD10; this interaction occurs in a Rho-independent manner. Interacts (via C-terminus) with STK24; this interaction occurs in a PDCD10-dependent and Rho-independent manner. Interacts (via C-terminus) with STK26; this interaction occurs in a PDCD10-dependent and Rho-independent manner. Interacts (via N-terminus) with 14-3-3 proteins; these interactions occur in a Rho-dependent manner. In terms of tissue distribution, expressed in the kidney exclusively by glomerular podocytes.

It is found in the cytoplasm. It localises to the golgi apparatus. Functionally, downstream effector protein for Rho-type small GTPases that plays a role in cell polarity and directional migration. Acts as an adapter protein, linking active Rho proteins to STK24 and STK26 kinases, and hence positively regulates Golgi reorientation in polarized cell migration upon Rho activation. Involved in the subcellular relocation of STK26 from the Golgi to cytoplasm punctae in a Rho- and PDCD10-dependent manner upon serum stimulation. This chain is Rho family-interacting cell polarization regulator 1, found in Mus musculus (Mouse).